The sequence spans 79 residues: Acyl carrier protein (79 aa).

Residues 2–77 (SSIEDRVKKI…QAVDYIKKHL (76 aa)) enclose the Carrier domain. The residue at position 37 (Ser-37) is an O-(pantetheine 4'-phosphoryl)serine.

It belongs to the acyl carrier protein (ACP) family. In terms of processing, 4'-phosphopantetheine is transferred from CoA to a specific serine of apo-ACP by AcpS. This modification is essential for activity because fatty acids are bound in thioester linkage to the sulfhydryl of the prosthetic group.

Its subcellular location is the cytoplasm. The protein operates within lipid metabolism; fatty acid biosynthesis. Carrier of the growing fatty acid chain in fatty acid biosynthesis. This Halorhodospira halophila (strain DSM 244 / SL1) (Ectothiorhodospira halophila (strain DSM 244 / SL1)) protein is Acyl carrier protein.